A 361-amino-acid chain; its full sequence is Endo-1,4-beta-xylanase 2 (361 aa).

The signal sequence occupies residues 1 to 26; the sequence is MHFSTITAALALLGLGAATPTDYSTS. Residues 46 to 354 form the GH10 domain; that stretch reads IGTALTIRDD…KPAYSSVLKT (309 aa). Residues Asn-88 and Asn-130 are each glycosylated (N-linked (GlcNAc...) asparagine). The Proton donor role is filled by Glu-160. Glu-276 (nucleophile) is an active-site residue. Cys-304 and Cys-310 are disulfide-bonded.

This sequence belongs to the glycosyl hydrolase 10 (cellulase F) family.

Its subcellular location is the secreted. The catalysed reaction is Endohydrolysis of (1-&gt;4)-beta-D-xylosidic linkages in xylans.. It functions in the pathway glycan degradation; xylan degradation. Its function is as follows. Endo-1,4-beta-xylanase involved in the hydrolysis of xylan, a major structural heterogeneous polysaccharide found in plant biomass representing the second most abundant polysaccharide in the biosphere, after cellulose. Hydrolyzes birch-wood xylan, with a similar activity toward oat-spelt xylan. Also shows weak activities toward pNP-beta-D-cellobioside and pNP-beta-D-xylopyranoside, but no detectable activity toward carboxymethyl cellulose and pNP-beta-L-arabinofuranoside.-. The sequence is that of Endo-1,4-beta-xylanase 2 (xynII) from Aureobasidium pullulans (Black yeast).